Consider the following 104-residue polypeptide: Synaptic plasticity regulator PANTS (104 aa).

The interval 58–104 (RRSAEAQADSLPPGPEGEPRVAGAGPNAVTGILTRNQGTERPHGDTR) is disordered. Over residues 95–104 (GTERPHGDTR) the composition is skewed to basic and acidic residues.

It belongs to the UPF0545 family. Interacts with RTN4 isoform A/Nogo-A; the interaction results in enhanced RTN4-mediated inhibition of AMPA receptor clustering. Also interacts with NCAM1, RANBP2 and CCT8. Rapidly degraded by proteolysis following neuronal stimulation, resulting in increased AMPA receptor clustering.

The protein localises to the synapse. It localises to the synaptic cleft. In terms of biological role, negatively regulates long-term potentiation and modulates adult synaptic plasticity. Stabilizes the interaction of RTN4 isoform A/Nogo-A with its receptors, inhibiting clustering of postsynaptic AMPA receptors at synaptic sites. Upon neuronal stimulation, degraded at synapses, reducing RTN4 signaling and allowing AMPA receptor clustering at individual synapses. This is Synaptic plasticity regulator PANTS from Bos taurus (Bovine).